Here is a 304-residue protein sequence, read N- to C-terminus: Non-specific ribonucleoside hydrolase RihC (304 aa).

Residue His-233 is part of the active site.

It belongs to the IUNH family. RihC subfamily.

Hydrolyzes both purine and pyrimidine ribonucleosides with a broad-substrate specificity. The polypeptide is Non-specific ribonucleoside hydrolase RihC (Escherichia coli O8 (strain IAI1)).